We begin with the raw amino-acid sequence, 150 residues long: Protein Turandot X1/X2 (150 aa).

An N-terminal signal peptide occupies residues 1–22; sequence MRLYIGSLLICVLLGIVPFATA. Residues 127-150 form a disordered region; it reads REEGQSNHANSPTTSPSRIQKMTK. Residues 132–150 show a composition bias toward polar residues; that stretch reads SNHANSPTTSPSRIQKMTK.

It belongs to the Turandot family.

It localises to the secreted. Its function is as follows. A humoral factor that may play a role in stress tolerance. The polypeptide is Protein Turandot X1/X2 (Drosophila sechellia (Fruit fly)).